The chain runs to 315 residues: GTP cyclohydrolase MptA (315 aa).

It belongs to the GTP cyclohydrolase IV family. Homodimer. Fe(2+) serves as cofactor.

The catalysed reaction is GTP + H2O = 7,8-dihydroneopterin 2',3'-cyclic phosphate + formate + diphosphate + H(+). The protein operates within cofactor biosynthesis; 5,6,7,8-tetrahydromethanopterin biosynthesis. Functionally, converts GTP to 7,8-dihydro-D-neopterin 2',3'-cyclic phosphate, the first intermediate in the biosynthesis of coenzyme methanopterin. This Methanococcus maripaludis (strain C7 / ATCC BAA-1331) protein is GTP cyclohydrolase MptA.